Consider the following 365-residue polypeptide: Putative glutamate--cysteine ligase 2-3 (365 aa).

This sequence belongs to the glutamate--cysteine ligase type 2 family. YbdK subfamily.

The enzyme catalyses L-cysteine + L-glutamate + ATP = gamma-L-glutamyl-L-cysteine + ADP + phosphate + H(+). ATP-dependent carboxylate-amine ligase which exhibits weak glutamate--cysteine ligase activity. The protein is Putative glutamate--cysteine ligase 2-3 of Mycolicibacterium smegmatis (strain ATCC 700084 / mc(2)155) (Mycobacterium smegmatis).